The sequence spans 382 residues: Lipid-A-disaccharide synthase (382 aa).

The protein belongs to the LpxB family.

The catalysed reaction is 2-N,3-O-bis[(3R)-3-hydroxytetradecanoyl]-alpha-D-glucosaminyl 1-phosphate + UDP-2-N,3-O-bis[(3R)-3-hydroxytetradecanoyl]-alpha-D-glucosamine = lipid A disaccharide (E. coli) + UDP + H(+). It catalyses the reaction a lipid X + a UDP-2-N,3-O-bis[(3R)-3-hydroxyacyl]-alpha-D-glucosamine = a lipid A disaccharide + UDP + H(+). The protein operates within glycolipid biosynthesis; lipid IV(A) biosynthesis; lipid IV(A) from (3R)-3-hydroxytetradecanoyl-[acyl-carrier-protein] and UDP-N-acetyl-alpha-D-glucosamine: step 5/6. Functionally, condensation of UDP-2,3-diacylglucosamine and 2,3-diacylglucosamine-1-phosphate to form lipid A disaccharide, a precursor of lipid A, a phosphorylated glycolipid that anchors the lipopolysaccharide to the outer membrane of the cell. This Shigella flexneri serotype 5b (strain 8401) protein is Lipid-A-disaccharide synthase.